The sequence spans 699 residues: D-(-)-3-hydroxybutyrate oligomer hydrolase (699 aa).

Positions 1-33 (MTAIRGGSRRAPGLALALLGGVLLGACHGDENA) are cleaved as a signal peptide. S311 functions as the Charge relay system in the catalytic mechanism.

Belongs to the D-(-)-3-hydroxybutyrate oligomer hydrolase family.

The protein localises to the secreted. It carries out the reaction (3R)-hydroxybutanoate dimer + H2O = 2 (R)-3-hydroxybutanoate + H(+). The protein operates within lipid metabolism; butanoate metabolism. Participates in the degradation of poly-3-hydroxybutyrate (PHB). It works downstream of poly(3-hydroxybutyrate) depolymerase, hydrolyzing D(-)-3-hydroxybutyrate oligomers of various length (3HB-oligomers) into 3HB-monomers. This is D-(-)-3-hydroxybutyrate oligomer hydrolase from Burkholderia mallei (strain SAVP1).